The following is a 276-amino-acid chain: Putative ankyrin repeat protein R838 (276 aa).

ANK repeat units lie at residues 134–163 (DGDNALLMAAENGYYEVVTYLINKGCDPRS), 164–193 (DYDYALRSAAEKGHIDVVKLLLEKGADISS), 195–223 (NHWPLSYAALEGKFEMVKFLISRGADVRA), and 225–253 (NYNPIKYALDGGHREIADYMLDLCPEIGS). The interval 254-276 (VSDDDTYDSDSSDYSEDDSESIN) is disordered. Over residues 255-276 (SDDDTYDSDSSDYSEDDSESIN) the composition is skewed to acidic residues.

The protein is Putative ankyrin repeat protein R838 of Acanthamoeba polyphaga (Amoeba).